We begin with the raw amino-acid sequence, 406 residues long: Calsequestrin-2 (406 aa).

The first 19 residues, 1–19, serve as a signal peptide directing secretion; the sequence is MKATCWILAGFCLLFCCKA. N335 is a glycosylation site (N-linked (GlcNAc...) asparagine). Residues 365–406 are disordered; the sequence is VLSGKINTEDDDDDDDDDDDDDDDDDDDDDDDDDDDDDDDDD. A compositionally biased stretch (acidic residues) spans 373–406; it reads EDDDDDDDDDDDDDDDDDDDDDDDDDDDDDDDDD.

The protein belongs to the calsequestrin family. Skeletal and heart muscle.

The protein resides in the sarcoplasmic reticulum lumen. Calsequestrin is a high-capacity, moderate affinity, calcium-binding protein and thus acts as an internal calcium store in muscle. Calcium ions are bound by clusters of acidic residues at the protein surface, especially at the interface between subunits. Can bind around 60 Ca(2+) ions. Regulates the release of lumenal Ca(2+) via the calcium release channel RYR2; this plays an important role in triggering muscle contraction. Plays a role in excitation-contraction coupling in the heart and in regulating the rate of heart beats. The sequence is that of Calsequestrin-2 (CASQ2) from Gallus gallus (Chicken).